We begin with the raw amino-acid sequence, 316 residues long: Ribonuclease Z (316 aa).

Zn(2+) contacts are provided by His59, His61, Asp63, His64, His135, Asp203, and His261. Asp63 functions as the Proton acceptor in the catalytic mechanism.

This sequence belongs to the RNase Z family. Homodimer. The cofactor is Zn(2+).

It carries out the reaction Endonucleolytic cleavage of RNA, removing extra 3' nucleotides from tRNA precursor, generating 3' termini of tRNAs. A 3'-hydroxy group is left at the tRNA terminus and a 5'-phosphoryl group is left at the trailer molecule.. Zinc phosphodiesterase, which displays some tRNA 3'-processing endonuclease activity. Probably involved in tRNA maturation, by removing a 3'-trailer from precursor tRNA. This chain is Ribonuclease Z, found in Nanoarchaeum equitans (strain Kin4-M).